Consider the following 65-residue polypeptide: Putative beta-neurotoxin RjAa12 (65 aa).

In terms of domain architecture, LCN-type CS-alpha/beta spans 1 to 64 (KEGYPVGRDG…VWDSSTNKCG (64 aa)). 4 disulfide bridges follow: cysteine 11–cysteine 63, cysteine 15–cysteine 37, cysteine 22–cysteine 44, and cysteine 26–cysteine 46.

Belongs to the long (4 C-C) scorpion toxin superfamily. Sodium channel inhibitor family. Beta subfamily. As to expression, expressed by the venom gland.

The protein localises to the secreted. Its function is as follows. Beta toxins bind voltage-independently at site-4 of sodium channels (Nav) and shift the voltage of activation toward more negative potentials thereby affecting sodium channel activation and promoting spontaneous and repetitive firing. The polypeptide is Putative beta-neurotoxin RjAa12 (Rhopalurus junceus (Caribbean blue scorpion)).